The following is a 120-amino-acid chain: Ribonuclease P protein component 2 (120 aa).

It belongs to the eukaryotic/archaeal RNase P protein component 2 family. As to quaternary structure, consists of a catalytic RNA component and at least 4-5 protein subunits.

The protein localises to the cytoplasm. The catalysed reaction is Endonucleolytic cleavage of RNA, removing 5'-extranucleotides from tRNA precursor.. Functionally, part of ribonuclease P, a protein complex that generates mature tRNA molecules by cleaving their 5'-ends. This Methanobrevibacter smithii (strain ATCC 35061 / DSM 861 / OCM 144 / PS) protein is Ribonuclease P protein component 2.